The chain runs to 233 residues: Eukaryotic translation initiation factor 4E-1 (233 aa).

A disordered region spans residues 1–51 (MVVEDALKTSASEDQAKTETNPKPREEDDEPEEGEIVGDEESASKPSKGIA). Over residues 14-26 (DQAKTETNPKPRE) the composition is skewed to basic and acidic residues. Residues 27–41 (EDDEPEEGEIVGDEE) show a composition bias toward acidic residues. EIF4G-binding regions lie at residues 55–58 (HALE) and 65–104 (FDSPAAKSAKTKQEDWGSSIRPIYTFSTVEEFWSIYNNIR). MRNA contacts are provided by residues 76–81 (KQEDWG), lysine 108, and 126–127 (WE). Cysteine 131 and cysteine 169 are oxidised to a cystine. The interval 152-161 (YTLLGMIGEQ) is EIF4G-binding. Residues 176–181 (RNRQEK) and 221–225 (MRHER) each bind mRNA.

It belongs to the eukaryotic initiation factor 4E family. As to quaternary structure, EIF4F is a multi-subunit complex, the composition of which varies with external and internal environmental conditions. It is composed of at least EIF4A, EIF4E and EIF4G. EIF4E is also known to interact with other partners. In higher plants two isoforms of EIF4F have been identified, named isoform EIF4F and isoform EIF(iso)4F. Isoform EIF4F has subunits p220 and p26, whereas isoform EIF(iso)4F has subunits p82 and p28. (Microbial infection) Does not interact with the VPg of Plum pox virus (PPV) strain D. Post-translationally, according to the redox status, the Cys-131-Cys-169 disulfide bridge may have a role in regulating protein function by affecting its ability to bind capped mRNA. Mostly expressed in leaves, flower buds, leaf buds and anthers, to a lower extent in roots, stems and green immature fruit, and, at low levels, in petals.

The protein resides in the nucleus. It is found in the cytoplasm. Component of the protein complex eIF4F, which is involved in the recognition of the mRNA cap, ATP-dependent unwinding of 5'-terminal secondary structure and recruitment of mRNA to the ribosome. Recognizes and binds the 7-methylguanosine-containing mRNA cap during an early step in the initiation of protein synthesis and facilitates ribosome binding by inducing the unwinding of the mRNAs secondary structures. Its function is as follows. (Microbial infection) Not involved in the plum pox virus (PPV) strain D infection process. The sequence is that of Eukaryotic translation initiation factor 4E-1 from Prunus domestica (Garden plum).